The sequence spans 489 residues: MARRNFKVLYVSGEVSPFVRFSALADFMASFPQAVEEEGFEARIMMPKYGTINDRKFRLHDVLRLSDIEVHLKEKTDLLHVKVTALPSSKIQTYFLYNEKYFKRNGLFTDMHSGNDTKVNTEKIIFFNVGVLETLQRLGWKPDIIHCHDWHASLIPLLLRTVYASNEFFKDIKTVLTIHNIYRQGILPFKIFQKLLPEEVCSGLHRQNDEVNMLYTGVEHVDLLTTTSKQYADTIRLDGEETYGLGRILEERKENLHGILNGIDTRQWNPATDKLIKKRYSIERLDGKADNKKALQEEAGLSVDAERPLVGVIAGFDEFQGADLLARSLEKLVALDMQLVICGSGDKVYEKTFRDFAEQYPEQVSLQIEYTDAFMHLAIAGMDILLMPGRIESCGMMQLFAMSYGTIPVVYAGGGIIETIHELQEGIGSGFIFHEYTDDSLVGKLSEALAMYSDEERWPQLVHEAMSKDFAWKSSAEEYDQLYRQLLEP.

R20 lines the ADP-alpha-D-glucose pocket.

It belongs to the glycosyltransferase 1 family. Bacterial/plant glycogen synthase subfamily.

The enzyme catalyses [(1-&gt;4)-alpha-D-glucosyl](n) + ADP-alpha-D-glucose = [(1-&gt;4)-alpha-D-glucosyl](n+1) + ADP + H(+). It participates in glycan biosynthesis; glycogen biosynthesis. In terms of biological role, synthesizes alpha-1,4-glucan chains using ADP-glucose. In Chlorobium phaeobacteroides (strain DSM 266 / SMG 266 / 2430), this protein is Glycogen synthase.